The sequence spans 2352 residues: Cell wall alpha-1,3-glucan synthase mok12 (2352 aa).

A disordered region spans residues 1786–1813 (SNDFGIREVPLSDANQSSQADSTSIDRY). The span at 1798 to 1813 (DANQSSQADSTSIDRY) shows a compositional bias: polar residues.

The protein belongs to the glycosyltransferase group 1 family.

The catalysed reaction is [(1-&gt;3)-alpha-D-glucosyl](n) + UDP-alpha-D-glucose = [(1-&gt;3)-alpha-D-glucosyl](n+1) + UDP + H(+). This chain is Cell wall alpha-1,3-glucan synthase mok12 (mok12), found in Schizosaccharomyces pombe (strain 972 / ATCC 24843) (Fission yeast).